Here is a 204-residue protein sequence, read N- to C-terminus: Protease (204 aa).

Catalysis depends on residues His-53, Asp-70, and Cys-121.

It belongs to the peptidase C5 family. Interacts with protease cofactor pVI-C; this interaction is necessary for protease activation.

It is found in the virion. It localises to the host nucleus. It catalyses the reaction Cleaves proteins of the adenovirus and its host cell at two consensus sites: -Yaa-Xaa-Gly-Gly-|-Xaa- and -Yaa-Xaa-Gly-Xaa-|-Gly- (in which Yaa is Met, Ile or Leu, and Xaa is any amino acid).. Its activity is regulated as follows. Requires DNA and protease cofactor for maximal activation. Inside nascent virions, becomes partially activated by binding to the viral DNA, allowing it to cleave the cofactor that binds to the protease and fully activates it. Actin, like the viral protease cofactor, seems to act as a cofactor in the cleavage of cytokeratin 18 and of actin itself. In terms of biological role, cleaves viral precursor proteins (pTP, pIIIa, pVI, pVII, pVIII, and pX) inside newly assembled particles giving rise to mature virions. Protease complexed to its cofactor slides along the viral DNA to specifically locate and cleave the viral precursors. Mature virions have a weakened organization compared to the unmature virions, thereby facilitating subsequent uncoating. Without maturation, the particle lacks infectivity and is unable to uncoat. Late in adenovirus infection, in the cytoplasm, may participate in the cytoskeleton destruction. Cleaves host cell cytoskeletal keratins K7 and K18. This is Protease from Porcine adenovirus A serotype 3 (PAdV-3).